A 217-amino-acid polypeptide reads, in one-letter code: Adenylate kinase (217 aa).

10 to 15 (GAGKGT) provides a ligand contact to ATP. The NMP stretch occupies residues 30–59 (STGDMFRAAIKAGTALGMKAKEYMDAGSLV). AMP contacts are provided by residues threonine 31, arginine 36, 57 to 59 (SLV), 85 to 88 (GFPR), and glutamine 92. The tract at residues 126 to 163 (GRRICRQCGGTYHMVFNPPAAEAVCDKCGGELYQRSDD) is LID. Arginine 127 lines the ATP pocket. Positions 130 and 133 each coordinate Zn(2+). ATP is bound at residue 136–137 (TY). Zn(2+)-binding residues include cysteine 150 and cysteine 153. Residues arginine 160 and arginine 171 each contribute to the AMP site. Residue glutamine 199 coordinates ATP.

It belongs to the adenylate kinase family. As to quaternary structure, monomer.

The protein resides in the cytoplasm. It catalyses the reaction AMP + ATP = 2 ADP. It participates in purine metabolism; AMP biosynthesis via salvage pathway; AMP from ADP: step 1/1. Functionally, catalyzes the reversible transfer of the terminal phosphate group between ATP and AMP. Plays an important role in cellular energy homeostasis and in adenine nucleotide metabolism. The sequence is that of Adenylate kinase from Desulfitobacterium hafniense (strain DSM 10664 / DCB-2).